Here is a 38-residue protein sequence, read N- to C-terminus: Mu/omega-theraphotoxin-Mb1a (38 aa).

Intrachain disulfides connect Cys-7/Cys-21, Cys-14/Cys-26, and Cys-20/Cys-33. Threonine amide is present on Thr-38.

This sequence belongs to the neurotoxin 10 (Hwtx-1) family. 28 (Jztx-11) subfamily. As to expression, expressed by the venom gland.

Its subcellular location is the secreted. Functionally, paralytic toxin that inhibits insect voltage-gated sodium (Nav) and calcium (Cav) channels in P.americana (American cockroach) dorsal unpaired median (DUM) neurons, and inhibits the B.germanica (German cockroach) Nav channel (BgNaV1). Also shows a delay in fast inactivation when tested on BgNaV1. May act as a gating-modifier toxin on Nav and as a pore blocker on Cav. In vivo, reversibly paralyzes both L.cuprina (Australian sheep blowfly) and M.domestica (housefly), but does not affect larvae of H.armigera (cotton bollworms). The chain is Mu/omega-theraphotoxin-Mb1a from Monocentropus balfouri (Socotra Island blue baboon tarantula).